We begin with the raw amino-acid sequence, 174 residues long: Co-chaperone protein HscB homolog (174 aa).

The J domain maps to 2–74 (NYFELFKFPP…IRRAEHMLSL (73 aa)).

The protein belongs to the HscB family. As to quaternary structure, interacts with HscA and stimulates its ATPase activity.

Functionally, co-chaperone involved in the maturation of iron-sulfur cluster-containing proteins. Seems to help targeting proteins to be folded toward HscA. In Shewanella oneidensis (strain ATCC 700550 / JCM 31522 / CIP 106686 / LMG 19005 / NCIMB 14063 / MR-1), this protein is Co-chaperone protein HscB homolog.